Consider the following 1006-residue polypeptide: GATA zinc finger domain-containing protein 7 (1006 aa).

Over residues 55–70 the composition is skewed to low complexity; sequence SSSNNFINNHHNNQSS. Disordered stretches follow at residues 55-116, 128-248, 381-499, 528-638, and 657-800; these read SSSN…APNL, PFQN…DPFY, NAKK…PLST, STSG…SSNS, and YNSN…NYHD. Residues 71-86 are compositionally biased toward polar residues; it reads DIHSISQSTPNLSTLI. 2 stretches are compositionally biased toward low complexity: residues 87-110 and 128-158; these read SSSS…NSSS and PFQN…CNNS. The span at 159–168 shows a compositional bias: polar residues; sequence PVSSSTNYIP. A compositionally biased stretch (low complexity) spans 169–180; sequence NNSTSNVVLNSS. Residues 181 to 190 show a composition bias toward polar residues; it reads IPTTSPNVLS. 2 stretches are compositionally biased toward low complexity: residues 205–241 and 388–410; these read NNNN…NNNN and TNTN…NNNN. Polar residues predominate over residues 411-426; it reads IQQANVNTSPISTSTT. 2 stretches are compositionally biased toward low complexity: residues 427 to 456 and 468 to 496; these read PNNN…QQAQ and SITP…GASP. The span at 528-539 shows a compositional bias: polar residues; the sequence is STSGMLSTTNPY. Low complexity predominate over residues 540–557; it reads THHSPNTSSTVSSSVTSP. Residues 558 to 589 show a composition bias toward polar residues; it reads LINQYGTNPTLTNNHSFYGSLASNQNTGASDG. Composition is skewed to low complexity over residues 590–601 and 619–638; these read NNNNNNNNNNNN and SSNP…SSNS. Polar residues predominate over residues 662–680; that stretch reads GSGMTTPQSLGHSPSHNDY. Low complexity-rich tracts occupy residues 681–706 and 713–785; these read NSNN…NSNN and SNSS…SSNN. The segment at 842-867 adopts a GATA-type zinc-finger fold; that stretch reads CHNCGTKNTPEWRRGPSGPATLCNAC. The interval 925–957 is disordered; sequence NNASSSSSSSSSSSSSSSSSSSTSSYSSSSYNI. Residues 928 to 954 are compositionally biased toward low complexity; that stretch reads SSSSSSSSSSSSSSSSSSSTSSYSSSS.

In Dictyostelium discoideum (Social amoeba), this protein is GATA zinc finger domain-containing protein 7 (gtaG).